The primary structure comprises 349 residues: Homoserine O-succinyltransferase (349 aa).

C146 serves as the catalytic Acyl-thioester intermediate. The substrate site is built by K167 and S196. H239 (proton acceptor) is an active-site residue. Residue E241 is part of the active site. R253 contacts substrate.

This sequence belongs to the MetA family.

The protein localises to the cytoplasm. The enzyme catalyses L-homoserine + succinyl-CoA = O-succinyl-L-homoserine + CoA. Its pathway is amino-acid biosynthesis; L-methionine biosynthesis via de novo pathway; O-succinyl-L-homoserine from L-homoserine: step 1/1. Its function is as follows. Transfers a succinyl group from succinyl-CoA to L-homoserine, forming succinyl-L-homoserine. In vitro, can also use glutaryl-CoA as acyl donor. The chain is Homoserine O-succinyltransferase from Thiobacillus denitrificans (strain ATCC 25259 / T1).